Here is a 287-residue protein sequence, read N- to C-terminus: MHRASHHELRAMFRALLDSSRCYHTASVFDPMSARIAADLGFECGILGGSVASLQVLAAPDFALITLSEFVEQATRIGRVARLPVIADADHGYGNALNVMRTVVELERAGIAALTIEDTLLPAQFGRKSTDLICVEEGVGKIRAALEARVDPALTIIARTNAELIDVDAVIQRTLAYQEAGADGICLVGVRDFAHLEAIAEHLHIPLMLVTYGNPQLRDDARLARLGVRVVVNGHAAYFAAIKATYDCLREERGAVASDLTASELSKKYTFPEEYQAWARDYMEVKE.

A substrate-binding site is contributed by Ser50. A Mg(2+)-binding site is contributed by Asp88. The substrate site is built by Arg159 and His235.

The protein belongs to the isocitrate lyase family. Oxaloacetate decarboxylase subfamily. In terms of assembly, homotetramer; dimer of dimers. Mg(2+) serves as cofactor.

The catalysed reaction is oxaloacetate + H(+) = pyruvate + CO2. Catalyzes the decarboxylation of oxaloacetate into pyruvate. Seems to play a role in maintaining cellular concentrations of bicarbonate and pyruvate. The chain is Oxaloacetate decarboxylase from Pseudomonas aeruginosa (strain LESB58).